A 199-amino-acid polypeptide reads, in one-letter code: Superoxide dismutase [Mn/Fe] (199 aa).

Fe(3+) is bound by residues H27, H81, D161, and H165. Mn(2+) contacts are provided by H27, H81, D161, and H165.

Belongs to the iron/manganese superoxide dismutase family. As to quaternary structure, homodimer. It depends on Mn(2+) as a cofactor. Fe(3+) serves as cofactor.

It catalyses the reaction 2 superoxide + 2 H(+) = H2O2 + O2. Functionally, destroys superoxide anion radicals which are normally produced within the cells and which are toxic to biological systems. Catalyzes the dismutation of superoxide anion radicals into O2 and H2O2 by successive reduction and oxidation of the transition metal ion at the active site. The sequence is that of Superoxide dismutase [Mn/Fe] (sodA) from Staphylococcus epidermidis.